We begin with the raw amino-acid sequence, 105 residues long: ATP synthase F(0) complex subunit a (105 aa).

The next 3 helical transmembrane spans lie at 14–34 (EGTP…SLFI), 47–67 (LTAG…LLPM), and 72–92 (AILT…VAMI).

It belongs to the ATPase A chain family. Component of the ATP synthase complex composed at least of ATP5F1A/subunit alpha, ATP5F1B/subunit beta, ATP5MC1/subunit c (homooctomer), MT-ATP6/subunit a, MT-ATP8/subunit 8, ATP5ME/subunit e, ATP5MF/subunit f, ATP5MG/subunit g, ATP5MK/subunit k, ATP5MJ/subunit j, ATP5F1C/subunit gamma, ATP5F1D/subunit delta, ATP5F1E/subunit epsilon, ATP5PF/subunit F6, ATP5PB/subunit b, ATP5PD/subunit d, ATP5PO/subunit OSCP. ATP synthase complex consists of a soluble F(1) head domain (subunits alpha(3) and beta(3)) - the catalytic core - and a membrane F(0) domain - the membrane proton channel (subunits c, a, 8, e, f, g, k and j). These two domains are linked by a central stalk (subunits gamma, delta, and epsilon) rotating inside the F1 region and a stationary peripheral stalk (subunits F6, b, d, and OSCP). Interacts with DNAJC30; interaction is direct.

Its subcellular location is the mitochondrion inner membrane. The enzyme catalyses H(+)(in) = H(+)(out). Subunit a, of the mitochondrial membrane ATP synthase complex (F(1)F(0) ATP synthase or Complex V) that produces ATP from ADP in the presence of a proton gradient across the membrane which is generated by electron transport complexes of the respiratory chain. ATP synthase complex consist of a soluble F(1) head domain - the catalytic core - and a membrane F(1) domain - the membrane proton channel. These two domains are linked by a central stalk rotating inside the F(1) region and a stationary peripheral stalk. During catalysis, ATP synthesis in the catalytic domain of F(1) is coupled via a rotary mechanism of the central stalk subunits to proton translocation. With the subunit c (ATP5MC1), forms the proton-conducting channel in the F(0) domain, that contains two crucial half-channels (inlet and outlet) that facilitate proton movement from the mitochondrial intermembrane space (IMS) into the matrix. Protons are taken up via the inlet half-channel and released through the outlet half-channel, following a Grotthuss mechanism. This Salmo trutta (Brown trout) protein is ATP synthase F(0) complex subunit a.